The primary structure comprises 287 residues: Protease HtpX (287 aa).

2 helical membrane passes run 4–24 and 33–53; these read IFLL…VMSI and SGLL…SLAI. Histidine 139 serves as a coordination point for Zn(2+). Glutamate 140 is a catalytic residue. Residue histidine 143 coordinates Zn(2+). The next 2 helical transmembrane spans lie at 154–174 and 195–215; these read LIQG…AGII and AVVF…VAYF. Glutamate 220 lines the Zn(2+) pocket.

It belongs to the peptidase M48B family. It depends on Zn(2+) as a cofactor.

It localises to the cell inner membrane. The polypeptide is Protease HtpX (Shewanella piezotolerans (strain WP3 / JCM 13877)).